A 120-amino-acid chain; its full sequence is Chaperonin GroEL (120 aa).

23–27 contributes to the ATP binding site; that stretch reads DGTTT.

This sequence belongs to the chaperonin (HSP60) family. In terms of assembly, forms a cylinder of 14 subunits composed of two heptameric rings stacked back-to-back. Interacts with the co-chaperonin GroES.

The protein resides in the cytoplasm. The catalysed reaction is ATP + H2O + a folded polypeptide = ADP + phosphate + an unfolded polypeptide.. Together with its co-chaperonin GroES, plays an essential role in assisting protein folding. The GroEL-GroES system forms a nano-cage that allows encapsulation of the non-native substrate proteins and provides a physical environment optimized to promote and accelerate protein folding. The polypeptide is Chaperonin GroEL (Mycobacterium intracellulare).